The primary structure comprises 249 residues: tRNA (guanine-N(1)-)-methyltransferase (249 aa).

S-adenosyl-L-methionine is bound by residues Gly113 and 133-138 (IGDFVL).

The protein belongs to the RNA methyltransferase TrmD family. In terms of assembly, homodimer.

The protein resides in the cytoplasm. The catalysed reaction is guanosine(37) in tRNA + S-adenosyl-L-methionine = N(1)-methylguanosine(37) in tRNA + S-adenosyl-L-homocysteine + H(+). In terms of biological role, specifically methylates guanosine-37 in various tRNAs. The protein is tRNA (guanine-N(1)-)-methyltransferase of Photobacterium profundum (strain SS9).